The sequence spans 163 residues: Xanthine-guanine phosphoribosyltransferase (163 aa).

5-phospho-alpha-D-ribose 1-diphosphate contacts are provided by residues 43-44 (RG) and 95-103 (DDLVDTGGT). Mg(2+) is bound at residue aspartate 96. Guanine contacts are provided by aspartate 99 and isoleucine 142. Xanthine contacts are provided by aspartate 99 and isoleucine 142. GMP-binding positions include 99–103 (DTGGT) and 141–142 (WI).

It belongs to the purine/pyrimidine phosphoribosyltransferase family. XGPT subfamily. As to quaternary structure, homotetramer. It depends on Mg(2+) as a cofactor.

It is found in the cell inner membrane. The catalysed reaction is GMP + diphosphate = guanine + 5-phospho-alpha-D-ribose 1-diphosphate. The enzyme catalyses XMP + diphosphate = xanthine + 5-phospho-alpha-D-ribose 1-diphosphate. It catalyses the reaction IMP + diphosphate = hypoxanthine + 5-phospho-alpha-D-ribose 1-diphosphate. It functions in the pathway purine metabolism; GMP biosynthesis via salvage pathway; GMP from guanine: step 1/1. The protein operates within purine metabolism; XMP biosynthesis via salvage pathway; XMP from xanthine: step 1/1. Functionally, purine salvage pathway enzyme that catalyzes the transfer of the ribosyl-5-phosphate group from 5-phospho-alpha-D-ribose 1-diphosphate (PRPP) to the N9 position of the 6-oxopurines guanine and xanthine to form the corresponding ribonucleotides GMP (guanosine 5'-monophosphate) and XMP (xanthosine 5'-monophosphate), with the release of PPi. To a lesser extent, also acts on hypoxanthine. The sequence is that of Xanthine-guanine phosphoribosyltransferase from Nitratidesulfovibrio vulgaris (strain DP4) (Desulfovibrio vulgaris).